We begin with the raw amino-acid sequence, 338 residues long: Protein FosB (338 aa).

Disordered regions lie at residues 1–54 (MFQA…PGSF), 79–191 (MAQS…DQLE), 222–276 (CKIP…PPNL), and 316–338 (GAQRTSGSDQPSDPLNSPSLLAL). Polar residues-rich tracts occupy residues 13–31 (SRCSSSPSAESQYLSSVDS) and 79–88 (MAQSQGQPLA). The residue at position 27 (serine 27) is a Phosphoserine. The segment covering 113–124 (SSGGASGSGGPS) has biased composition (gly residues). Positions 125–137 (TSGTTSGPGPARP) are enriched in low complexity. In terms of domain architecture, bZIP spans 155 to 218 (EEKRRVRRER…ERLEFVLVAH (64 aa)). The basic motif stretch occupies residues 157 to 182 (KRRVRRERNKLAAAKCRNRRRELTDR). A leucine-zipper region spans residues 183-211 (LQAETDQLEEEKAELESEIAELQKEKERL). Over residues 256 to 265 (LPPPPPPPLP) the composition is skewed to pro residues. 2 stretches are compositionally biased toward polar residues: residues 266–276 (FQTSQDAPPNL) and 318–338 (QRTSGSDQPSDPLNSPSLLAL).

The protein belongs to the bZIP family. Fos subfamily. As to quaternary structure, heterodimer; binds to DNA as heterodimer. Component of an AP-1 transcription factor complex; composed of FOS-JUN heterodimers. As part of the AP-1 transcription factor complex, forms heterodimers with JUN, JUNB or JUND, thereby binding to the AP-1 consensus sequence and stimulating transcription. Interacts with the BAF multiprotein chromatin-remodeling complex subunits SMARCB1 and SMARCD1. Interacts with ARID1A and JUN. Homodimer under oxidizing conditions and monomer under reducing conditions (in vitro). Heterodimer; binds to DNA as heterodimer. Forms heterodimers with JUNB, JUN or JUND; thereby binding to the AP-1 consensus sequence but does not stimulate transcription. Forms heterodimers with JUND under oxidizing conditions. Phosphorylated. In terms of processing, phosphorylated at Ser-27 by CSNK2A1; phosphorylation increases protein stability and transactivation potential. In terms of tissue distribution, expressed in the nucleus accumbens of the striatum (at protein level).

The protein localises to the nucleus. Heterodimerizes with proteins of the JUN family to form an AP-1 transcription factor complex, thereby enhancing their DNA binding activity to gene promoters containing an AP-1 consensus sequence 5'-TGA[GC]TCA-3' and enhancing their transcriptional activity. As part of the AP-1 complex, facilitates enhancer selection together with cell-type-specific transcription factors by collaboratively binding to nucleosomal enhancers and recruiting the SWI/SNF (BAF) chromatin remodeling complex to establish accessible chromatin. Together with JUN, plays a role in activation-induced cell death of T cells by binding to the AP-1 promoter site of FASLG/CD95L, and inducing its transcription in response to activation of the TCR/CD3 signaling pathway. Exhibits transactivation activity in vitro. Involved in the display of nurturing behavior towards newborns. May play a role in neurogenesis in the hippocampus and in learning and memory-related tasks by regulating the expression of various genes involved in neurogenesis, depression and epilepsy. Implicated in behavioral responses related to morphine reward and spatial memory. In terms of biological role, exhibits lower transactivation activity than isoform 1 in vitro. The heterodimer with JUN does not display any transcriptional activity, and may thereby act as an transcriptional inhibitor. May be involved in the regulation of neurogenesis in the hippocampus. May play a role in synaptic modifications in nucleus accumbens medium spiny neurons and thereby play a role in adaptive and pathological reward-dependent learning, including maladaptive responses involved in drug addiction. Seems to be more stably expressed with a half-life of ~9.5 hours in cell culture as compared to 1.5 hours half-life of isoform 1. The sequence is that of Protein FosB (FOSB) from Homo sapiens (Human).